Consider the following 183-residue polypeptide: UPF0725 protein At4g11700 (183 aa).

This sequence belongs to the UPF0725 (EMB2204) family.

In Arabidopsis thaliana (Mouse-ear cress), this protein is UPF0725 protein At4g11700.